A 78-amino-acid chain; its full sequence is Large ribosomal subunit protein eL38 (78 aa).

This sequence belongs to the eukaryotic ribosomal protein eL38 family. In terms of assembly, component of the large ribosomal subunit. Mature ribosomes consist of a small (40S) and a large (60S) subunit. The 40S subunit contains about 32 different proteins and 1 molecule of RNA (18S). The 60S subunit contains 45 different proteins and 3 molecules of RNA (25S, 5.8S and 5S).

The protein localises to the cytoplasm. Functionally, component of the ribosome, a large ribonucleoprotein complex responsible for the synthesis of proteins in the cell. The small ribosomal subunit (SSU) binds messenger RNAs (mRNAs) and translates the encoded message by selecting cognate aminoacyl-transfer RNA (tRNA) molecules. The large subunit (LSU) contains the ribosomal catalytic site termed the peptidyl transferase center (PTC), which catalyzes the formation of peptide bonds, thereby polymerizing the amino acids delivered by tRNAs into a polypeptide chain. The nascent polypeptides leave the ribosome through a tunnel in the LSU and interact with protein factors that function in enzymatic processing, targeting, and the membrane insertion of nascent chains at the exit of the ribosomal tunnel. This Candida albicans (strain SC5314 / ATCC MYA-2876) (Yeast) protein is Large ribosomal subunit protein eL38.